A 466-amino-acid chain; its full sequence is Adenosylhomocysteinase (466 aa).

Substrate contacts are provided by Thr-57, Asp-132, and Glu-192. Thr-193–Thr-195 lines the NAD(+) pocket. Positions 222 and 226 each coordinate substrate. Residues Asn-227, Gly-256–Gly-261, Glu-279, Asn-314, Ile-335–His-337, and Asn-380 each bind NAD(+).

Belongs to the adenosylhomocysteinase family. It depends on NAD(+) as a cofactor.

It localises to the cytoplasm. The enzyme catalyses S-adenosyl-L-homocysteine + H2O = L-homocysteine + adenosine. The protein operates within amino-acid biosynthesis; L-homocysteine biosynthesis; L-homocysteine from S-adenosyl-L-homocysteine: step 1/1. In terms of biological role, may play a key role in the regulation of the intracellular concentration of adenosylhomocysteine. In Brucella abortus (strain S19), this protein is Adenosylhomocysteinase.